Reading from the N-terminus, the 375-residue chain is 1-deoxy-D-xylulose 5-phosphate reductoisomerase (375 aa).

T10, G11, S12, V13, K37, and N114 together coordinate NADPH. Position 115 (K115) interacts with 1-deoxy-D-xylulose 5-phosphate. An NADPH-binding site is contributed by E116. Mn(2+) is bound at residue D136. 4 residues coordinate 1-deoxy-D-xylulose 5-phosphate: S137, E138, S162, and H185. A Mn(2+)-binding site is contributed by E138. G191 serves as a coordination point for NADPH. 1-deoxy-D-xylulose 5-phosphate contacts are provided by S198, N203, K204, and E207. Position 207 (E207) interacts with Mn(2+).

This sequence belongs to the DXR family. Mg(2+) serves as cofactor. Mn(2+) is required as a cofactor.

The enzyme catalyses 2-C-methyl-D-erythritol 4-phosphate + NADP(+) = 1-deoxy-D-xylulose 5-phosphate + NADPH + H(+). It participates in isoprenoid biosynthesis; isopentenyl diphosphate biosynthesis via DXP pathway; isopentenyl diphosphate from 1-deoxy-D-xylulose 5-phosphate: step 1/6. Its function is as follows. Catalyzes the NADPH-dependent rearrangement and reduction of 1-deoxy-D-xylulose-5-phosphate (DXP) to 2-C-methyl-D-erythritol 4-phosphate (MEP). In Sulfurihydrogenibium sp. (strain YO3AOP1), this protein is 1-deoxy-D-xylulose 5-phosphate reductoisomerase.